Reading from the N-terminus, the 282-residue chain is Acyl-CoA-binding domain-containing protein 6 (282 aa).

Residues 1–31 (MASSFLPAGAITGDSGGELSSGDDSGEVEFP) form a disordered region. Positions 42–127 (LAELFEKAAA…VKKLDPGWNP (86 aa)) constitute an ACB domain. An acyl-CoA-binding positions include 69–73 (YARYK) and Lys95. The residue at position 106 (Ser106) is a Phosphoserine. Position 114 (Tyr114) interacts with an acyl-CoA. 2 ANK repeats span residues 191–220 (EGRALLHWACDRGHKELVTVLLQHRADINC) and 224–253 (EGQTALHYASACEFLDIVELLLQSGADPTL).

As to quaternary structure, monomer. Detected in placenta and spleen (at protein level). Detected in placenta, umbilical cord blood, CD34-positive hematopoietic progenitor cells and bone marrow.

The protein localises to the cytoplasm. It localises to the nucleus. In terms of biological role, binds long-chain acyl-coenzyme A molecules with a strong preference for unsaturated C18:1-CoA, lower affinity for unsaturated C20:4-CoA, and very weak affinity for saturated C16:0-CoA. Does not bind fatty acids. Plays a role in protein N-myristoylation. The polypeptide is Acyl-CoA-binding domain-containing protein 6 (ACBD6) (Homo sapiens (Human)).